Here is a 264-residue protein sequence, read N- to C-terminus: Hydroxyethylthiazole kinase (264 aa).

Met52 provides a ligand contact to substrate. 2 residues coordinate ATP: Arg127 and Thr173. Position 200 (Gly200) interacts with substrate.

Belongs to the Thz kinase family. The cofactor is Mg(2+).

The catalysed reaction is 5-(2-hydroxyethyl)-4-methylthiazole + ATP = 4-methyl-5-(2-phosphooxyethyl)-thiazole + ADP + H(+). The protein operates within cofactor biosynthesis; thiamine diphosphate biosynthesis; 4-methyl-5-(2-phosphoethyl)-thiazole from 5-(2-hydroxyethyl)-4-methylthiazole: step 1/1. Catalyzes the phosphorylation of the hydroxyl group of 4-methyl-5-beta-hydroxyethylthiazole (THZ). This chain is Hydroxyethylthiazole kinase, found in Pectobacterium atrosepticum (strain SCRI 1043 / ATCC BAA-672) (Erwinia carotovora subsp. atroseptica).